The sequence spans 652 residues: MSQVHKHAIPSAIAEHALINPTQYQQYYQQSVQDPETFWGEQGKILDWIKPYSRVKNTSFDPGHISIRWFEDGTLNLAANCLDRHLAERGDQTAIIWEGDDPTQSKQVTYKQLHHDVCQFANVLKKLGVKKGDVVAIYMPMVPEAAVAMLACARIGAVHSVIFGGFSPEAVAGRIIDSNSKLVITADEGLRAGRAVPLKKNVDDALKNPGVKSITNVVVFQRTGKPGYWQEGRDLWWHELTAGVSADCPPEEMNAEDPLFILYTSGSTGKPKGVLHTTGGYLVYAAMTFKYVFDYHDGDVYWCTADVGWVTGHSYLLYGPLACGAITLMFEGVPNYPGVNRLSQVIDKHQVNILYTAPTAIRALMAEGDKAIEGTKRDSLRIMGSVGEPINPEAWEWYYNKIGNAKCPIVDTWWQTETGGFMITPLPGATELKAGSATRPFFGVQPALVDNIGTVQEGACEGNLVITDSWPGQARTLFGDHDRFEQTYFSTFKGMYFSGDGARRDEDGYYWITGRVDDVLNVSGHRLGTAEIESALVSHPKIAEAAVVGIPHNIKGQAIYAYITLNHGEEPTPELYTEVRNWVRKEIGPIATPDVLHWTDSLPKTRSGKIMRRILRKIAAGDTSNLGDTSTLADPAVVDKLLEEKQSMKVPS.

Residues 191–194, threonine 311, and asparagine 335 each bind CoA; that span reads RAGR. Residues 387–389, 411–416, aspartate 500, and arginine 515 contribute to the ATP site; these read GEP and DTWWQT. Serine 523 lines the CoA pocket. Arginine 526 contributes to the ATP binding site. Positions 537, 539, and 542 each coordinate Mg(2+). A CoA-binding site is contributed by arginine 584. At lysine 609 the chain carries N6-acetyllysine.

The protein belongs to the ATP-dependent AMP-binding enzyme family. Mg(2+) is required as a cofactor. Post-translationally, acetylated. Deacetylation by the SIR2-homolog deacetylase activates the enzyme.

The catalysed reaction is acetate + ATP + CoA = acetyl-CoA + AMP + diphosphate. In terms of biological role, catalyzes the conversion of acetate into acetyl-CoA (AcCoA), an essential intermediate at the junction of anabolic and catabolic pathways. Acs undergoes a two-step reaction. In the first half reaction, Acs combines acetate with ATP to form acetyl-adenylate (AcAMP) intermediate. In the second half reaction, it can then transfer the acetyl group from AcAMP to the sulfhydryl group of CoA, forming the product AcCoA. Enables the cell to use acetate during aerobic growth to generate energy via the TCA cycle, and biosynthetic compounds via the glyoxylate shunt. Acetylates CheY, the response regulator involved in flagellar movement and chemotaxis. This Serratia proteamaculans (strain 568) protein is Acetyl-coenzyme A synthetase.